A 428-amino-acid chain; its full sequence is MTQLEEARKGVVTEEMKFIAEREGIDAEKLRRNVAKGYTVIFRNVRHDWVKPVAVGAGVRVKVNANIGTSRDIVDVKAEIEKAKVAVKYGADTIMDLSTGGDLDEIRKTIMHAVDVPVGTVPIYQAAEEMLAKGKAIIEMSEEDMWRAVEKHFKDGVDYTTIHVGVTKEVVEKMKRTKRAVGMVSRGGTFLAAWILHWGEENPFYKDYDYLLELAREYDVVLSLGDGLRPGGLPDAGDELQIAELYTLGRLVRRAREAGVQTMVEGPGHVPIDQIAAQVKLAKVATDNAPFYVLGPIVTDIFPGYDHITAAIGGAIAALNGADFLCYVTPAEHLGLPDVEHVRQGVIAAKIAAHAVNLTRFEADFKKDYLMALARGKLNWARQFELSMDKERFVEIRKERPTKTEACSMCGDLCAIKLINDMLAGERK.

Substrate-binding positions include asparagine 66, methionine 95, tyrosine 124, histidine 163, 185-187 (SRG), 226-229 (DGLR), and glutamate 265. Residue histidine 269 participates in Zn(2+) binding. Residue tyrosine 292 participates in substrate binding. Histidine 333 contacts Zn(2+). 3 residues coordinate [4Fe-4S] cluster: cysteine 407, cysteine 410, and cysteine 414.

It belongs to the ThiC family. [4Fe-4S] cluster is required as a cofactor.

The catalysed reaction is 5-amino-1-(5-phospho-beta-D-ribosyl)imidazole + S-adenosyl-L-methionine = 4-amino-2-methyl-5-(phosphooxymethyl)pyrimidine + CO + 5'-deoxyadenosine + formate + L-methionine + 3 H(+). It functions in the pathway cofactor biosynthesis; thiamine diphosphate biosynthesis. Its function is as follows. Catalyzes the synthesis of the hydroxymethylpyrimidine phosphate (HMP-P) moiety of thiamine from aminoimidazole ribotide (AIR) in a radical S-adenosyl-L-methionine (SAM)-dependent reaction. This Thermococcus kodakarensis (strain ATCC BAA-918 / JCM 12380 / KOD1) (Pyrococcus kodakaraensis (strain KOD1)) protein is Phosphomethylpyrimidine synthase.